Reading from the N-terminus, the 510-residue chain is Light-independent protochlorophyllide reductase subunit B (510 aa).

Asp36 is a binding site for [4Fe-4S] cluster. Asp296 serves as the catalytic Proton donor. 431-432 (GM) serves as a coordination point for substrate.

The protein belongs to the ChlB/BchB/BchZ family. Protochlorophyllide reductase is composed of three subunits; ChlL, ChlN and ChlB. Forms a heterotetramer of two ChlB and two ChlN subunits. [4Fe-4S] cluster is required as a cofactor.

The protein localises to the plastid. It is found in the chloroplast. It catalyses the reaction chlorophyllide a + oxidized 2[4Fe-4S]-[ferredoxin] + 2 ADP + 2 phosphate = protochlorophyllide a + reduced 2[4Fe-4S]-[ferredoxin] + 2 ATP + 2 H2O. It functions in the pathway porphyrin-containing compound metabolism; chlorophyll biosynthesis (light-independent). Component of the dark-operative protochlorophyllide reductase (DPOR) that uses Mg-ATP and reduced ferredoxin to reduce ring D of protochlorophyllide (Pchlide) to form chlorophyllide a (Chlide). This reaction is light-independent. The NB-protein (ChlN-ChlB) is the catalytic component of the complex. This Physcomitrium patens (Spreading-leaved earth moss) protein is Light-independent protochlorophyllide reductase subunit B.